Here is a 441-residue protein sequence, read N- to C-terminus: L-seryl-tRNA(Sec) selenium transferase (441 aa).

Residue Lys283 is modified to N6-(pyridoxal phosphate)lysine.

This sequence belongs to the SelA family. Pyridoxal 5'-phosphate serves as cofactor.

The protein localises to the cytoplasm. The catalysed reaction is L-seryl-tRNA(Sec) + selenophosphate + H(+) = L-selenocysteinyl-tRNA(Sec) + phosphate. The protein operates within aminoacyl-tRNA biosynthesis; selenocysteinyl-tRNA(Sec) biosynthesis; selenocysteinyl-tRNA(Sec) from L-seryl-tRNA(Sec) (bacterial route): step 1/1. In terms of biological role, converts seryl-tRNA(Sec) to selenocysteinyl-tRNA(Sec) required for selenoprotein biosynthesis. This is L-seryl-tRNA(Sec) selenium transferase from Campylobacter concisus (strain 13826).